The following is a 167-amino-acid chain: Disulfide bond formation protein B (167 aa).

The Cytoplasmic portion of the chain corresponds to 1–12 (MFLNLLDAPRRL). The helical transmembrane segment at 13–29 (LALVALGCVALLAFGLY) threads the bilayer. Residues 30 to 47 (LQHVVGLEPCPMCIVQRY) are Periplasmic-facing. A disulfide bond links cysteine 39 and cysteine 42. The helical transmembrane segment at 48–63 (ALVLVAIVAGLTAITS) threads the bilayer. Residues 64 to 69 (NKKGLI) lie on the Cytoplasmic side of the membrane. A helical transmembrane segment spans residues 70–87 (TGSGVLLLLAGFGAFVAA). At 88–143 (RQSFLQWYPPEVASCGRDFYGMIETFPLQRAIPMIFKGSGDCAKVDWTFLGGSIAN) the chain is on the periplasmic side. Cysteine 102 and cysteine 129 are joined by a disulfide. A helical transmembrane segment spans residues 144–162 (WSFVCFAVIGLTALTLIAR). The Cytoplasmic portion of the chain corresponds to 163-167 (LARQR).

It belongs to the DsbB family.

The protein resides in the cell inner membrane. Its function is as follows. Required for disulfide bond formation in some periplasmic proteins. Acts by oxidizing the DsbA protein. This is Disulfide bond formation protein B from Polaromonas naphthalenivorans (strain CJ2).